The primary structure comprises 40 residues: Cytolysin SmT-1 (40 aa).

A plays an important role in the hemolytic activity region spans residues 3–12 (ALAGTIIAGA). The N-terminal region stretch occupies residues 11 to 30 (GASLGFQILDKVLGELGKVS).

The protein belongs to the actinoporin family. Sea anemone subfamily. In terms of assembly, octamer or nonamer in membranes. Monomer in the soluble state.

It is found in the secreted. Its subcellular location is the nematocyst. The protein resides in the target cell membrane. Pore-forming protein that forms cations-selective hydrophilic pores of around 1 nm and causes cardiac stimulation and cytolysis. Pore formation is a multi-step process that involves specific recognition of membrane sphingomyelin (but neither cholesterol nor phosphatidylcholine) using aromatic rich region and adjacent phosphocholine (POC) binding site, firm binding to the membrane (mainly driven by hydrophobic interactions) accompanied by the transfer of the N-terminal region to the lipid-water interface and finally pore formation after oligomerization of monomers. This toxin shows hemolytic activities. In Stichodactyla mertensii (Merten's carpet sea anemone), this protein is Cytolysin SmT-1.